Reading from the N-terminus, the 213-residue chain is Thymidylate kinase (213 aa).

10–17 (GLEGAGKT) contributes to the ATP binding site.

The protein belongs to the thymidylate kinase family.

The catalysed reaction is dTMP + ATP = dTDP + ADP. Phosphorylation of dTMP to form dTDP in both de novo and salvage pathways of dTTP synthesis. This is Thymidylate kinase from Escherichia coli O1:K1 / APEC.